The chain runs to 477 residues: Ribulose bisphosphate carboxylase large chain (477 aa).

The propeptide occupies 1–2; that stretch reads MS. The residue at position 3 (P3) is an N-acetylproline. K14 is modified (N6,N6,N6-trimethyllysine). 2 residues coordinate substrate: N123 and T173. The Proton acceptor role is filled by K175. A substrate-binding site is contributed by K177. Positions 201, 203, and 204 each coordinate Mg(2+). K201 carries the post-translational modification N6-carboxylysine. Catalysis depends on H294, which acts as the Proton acceptor. Substrate-binding residues include R295, H327, and S379.

This sequence belongs to the RuBisCO large chain family. Type I subfamily. Heterohexadecamer of 8 large chains and 8 small chains; disulfide-linked. The disulfide link is formed within the large subunit homodimers. It depends on Mg(2+) as a cofactor. Post-translationally, the disulfide bond which can form in the large chain dimeric partners within the hexadecamer appears to be associated with oxidative stress and protein turnover.

The protein resides in the plastid. Its subcellular location is the chloroplast. The catalysed reaction is 2 (2R)-3-phosphoglycerate + 2 H(+) = D-ribulose 1,5-bisphosphate + CO2 + H2O. It catalyses the reaction D-ribulose 1,5-bisphosphate + O2 = 2-phosphoglycolate + (2R)-3-phosphoglycerate + 2 H(+). RuBisCO catalyzes two reactions: the carboxylation of D-ribulose 1,5-bisphosphate, the primary event in carbon dioxide fixation, as well as the oxidative fragmentation of the pentose substrate in the photorespiration process. Both reactions occur simultaneously and in competition at the same active site. This chain is Ribulose bisphosphate carboxylase large chain, found in Digitalis purpurea (Common foxglove).